The following is a 442-amino-acid chain: Protein translocase subunit SecY (442 aa).

The next 10 helical transmembrane spans lie at 29-49, 69-89, 126-146, 153-173, 182-202, 217-237, 274-294, 320-340, 377-397, and 400-420; these read LITI…VPDI, IFTG…LPYI, YIAF…LLRP, PLFI…VMWI, IGNG…PQTL, ITAV…IVFV, VMPI…AGFA, VYTV…ASLI, LTFL…FVEQ, and GVTT…GVAI.

The protein belongs to the SecY/SEC61-alpha family. In terms of assembly, component of the Sec protein translocase complex. Heterotrimer consisting of SecY, SecE and SecG subunits. The heterotrimers can form oligomers, although 1 heterotrimer is thought to be able to translocate proteins. Interacts with the ribosome. Interacts with SecDF, and other proteins may be involved. Interacts with SecA.

The protein localises to the cell inner membrane. It localises to the cellular thylakoid membrane. In terms of biological role, the central subunit of the protein translocation channel SecYEG. Consists of two halves formed by TMs 1-5 and 6-10. These two domains form a lateral gate at the front which open onto the bilayer between TMs 2 and 7, and are clamped together by SecE at the back. The channel is closed by both a pore ring composed of hydrophobic SecY resides and a short helix (helix 2A) on the extracellular side of the membrane which forms a plug. The plug probably moves laterally to allow the channel to open. The ring and the pore may move independently. The chain is Protein translocase subunit SecY from Synechocystis sp. (strain ATCC 27184 / PCC 6803 / Kazusa).